Here is a 538-residue protein sequence, read N- to C-terminus: [Pyruvate dehydrogenase [acetyl-transferring]]-phosphatase 1, mitochondrial (538 aa).

The N-terminal 71 residues, 1–71 (MPAPTQLFFP…WWQYTQGRRY (71 aa)), are a transit peptide targeting the mitochondrion. A PPM-type phosphatase domain is found at 109–525 (ILGFDSNQLP…DDITIIVVQF (417 aa)). Mn(2+) is bound by residues D144 and G145. K202 carries the N6-acetyllysine modification. Mn(2+)-binding residues include D418 and D516.

It belongs to the PP2C family. Heterodimer of a catalytic (PDP1) and a regulatory (PDPR) subunit. The cofactor is Mn(2+). Requires Mg(2+) as cofactor.

It localises to the mitochondrion. It catalyses the reaction O-phospho-L-seryl-[pyruvate dehydrogenase E1 alpha subunit] + H2O = L-seryl-[pyruvate dehydrogenase E1 alpha subunit] + phosphate. Magnesium-dependent and calcium-stimulated. PDP1 activity strongly depends on its Ca(2+)-dependent binding to the lipoyl domain of E2 subunit of component of the pyruvate dehydrogenase complex. Mitochondrial enzyme that catalyzes the dephosphorylation and concomitant reactivation of the alpha subunit of the E1 component of the pyruvate dehydrogenase complex (PDC), thereby stimulating the conversion of pyruvate into acetyl-CoA. This Mus musculus (Mouse) protein is [Pyruvate dehydrogenase [acetyl-transferring]]-phosphatase 1, mitochondrial (Pdp1).